The primary structure comprises 200 residues: Large ribosomal subunit protein uL4 (200 aa).

A disordered region spans residues 43 to 65; that stretch reads RAQKTRSEVSGGGAKPWRQKGTG.

It belongs to the universal ribosomal protein uL4 family. As to quaternary structure, part of the 50S ribosomal subunit.

Its function is as follows. One of the primary rRNA binding proteins, this protein initially binds near the 5'-end of the 23S rRNA. It is important during the early stages of 50S assembly. It makes multiple contacts with different domains of the 23S rRNA in the assembled 50S subunit and ribosome. Functionally, forms part of the polypeptide exit tunnel. This is Large ribosomal subunit protein uL4 from Aliivibrio salmonicida (strain LFI1238) (Vibrio salmonicida (strain LFI1238)).